The sequence spans 507 residues: MLLHDVAITSMDVAATSSRLTKVARIAALLHRAAPDTQLVTIIVSWLSGELPQRHIGVGWAALRSLPPPAPQPALTVTGVDATLSKIGTLPGKGSQAQRAALVAELFSAATEAEQTFLLRLLGGELRQGAKGGIMADAVAQAAGLPAATVQRAAMLGGDLAAAAAAGLSGAALDTFTLRVGRPIGPMLAQTATSVHDALERHGGTTIFEAKLDGARVQIHRANDQVRIYTRSLDDVTARLPEVVEATLALPVRDLVADGEAIALCPDNRPQRFQVTASRFGRSVDVAAARATQPLSVFFFDILHRDGTDLLEAPTTERLAALDALVPARHRVDRLITSDPTDAANFLDATLAAGHEGVMAKAPAARYLAGRRGAGWLKVKPVHTLDLVVLAVEWGSGRRRGKLSNIHLGARDPATGGFVMVGKTFKGMTDAMLDWQTTRFHEIAVGPTDGYVVQLRPEQVVEVALDGVQRSSRYPGGLALRFARVVRYRADKDPAEADTIDAVRALY.

The not required for adenylyltransferase activity, required for nick joining stretch occupies residues 1–172; sequence MLLHDVAITS…AAAAGLSGAA (172 aa). Glu-209 serves as a coordination point for ATP. Lys-211 functions as the N6-AMP-lysine intermediate in the catalytic mechanism. The ATP site is built by Arg-216, Arg-231, Glu-260, Phe-300, Arg-372, and Lys-378.

The protein belongs to the ATP-dependent DNA ligase family. Monomer. Mg(2+) is required as a cofactor.

The catalysed reaction is ATP + (deoxyribonucleotide)n-3'-hydroxyl + 5'-phospho-(deoxyribonucleotide)m = (deoxyribonucleotide)n+m + AMP + diphosphate.. In terms of biological role, DNA ligase that seals nicks in double-stranded DNA during DNA replication, DNA recombination and DNA repair. This Mycobacterium tuberculosis (strain ATCC 25618 / H37Rv) protein is DNA ligase B (ligB).